Consider the following 91-residue polypeptide: MRNYELTTITRVSSREVAKSEIQETLKKHSVSVTAEEDWGQRKLWHPIKHEEQGIFHHYKCSADPNAIEKVEKEFLINQNILRSMVVRLHG.

This sequence belongs to the bacterial ribosomal protein bS6 family.

Its function is as follows. Binds together with bS18 to 16S ribosomal RNA. The protein is Small ribosomal subunit protein bS6 of Leptospira interrogans serogroup Icterohaemorrhagiae serovar copenhageni (strain Fiocruz L1-130).